A 211-amino-acid chain; its full sequence is tRNA (guanine-N(7)-)-methyltransferase (211 aa).

Residues glutamate 37, aspartate 62, glutamate 89, and aspartate 112 each coordinate S-adenosyl-L-methionine. Aspartate 112 is a catalytic residue. Substrate contacts are provided by lysine 116 and aspartate 148.

Belongs to the class I-like SAM-binding methyltransferase superfamily. TrmB family.

It catalyses the reaction guanosine(46) in tRNA + S-adenosyl-L-methionine = N(7)-methylguanosine(46) in tRNA + S-adenosyl-L-homocysteine. It participates in tRNA modification; N(7)-methylguanine-tRNA biosynthesis. Catalyzes the formation of N(7)-methylguanine at position 46 (m7G46) in tRNA. The polypeptide is tRNA (guanine-N(7)-)-methyltransferase (Geobacter metallireducens (strain ATCC 53774 / DSM 7210 / GS-15)).